A 609-amino-acid polypeptide reads, in one-letter code: MPTWWGRKSCKNKDDNHRGIISTDRDIKSSAVVVDPPLTPTRGGTPRCSREFAGASSAFSGFDSDSTEKKGHPLPRPLLSPVSIHHQDHVSGSTSGSTSVSSVSSSGSADDQSQLVASRGRGDVKFNVAAAPRSPERVSPKAATITTRPTSPRHQRLSGVVSLESSTGRNDDGRSSSECHPLPRPPTSPTSPSAVHGSRIGGGYETSPSGFSTWKKGKFLGSGTFGQVYLGFNSEKGKMCAIKEVKVISDDQTSKECLKQLNQEINLLNQLCHPNIVQYYGSELSEETLSVYLEYVSGGSIHKLLKDYGSFTEPVIQNYTRQILAGLAYLHGRNTVHRDIKGANILVDPNGEIKLADFGMAKHVTAFSTMLSFKGSPYWMAPEVVMSQNGYTHAVDIWSLGCTILEMATSKPPWSQFEGVAAIFKIGNSKDTPEIPDHLSNDAKNFIRLCLQRNPTVRPTASQLLEHPFLRNTTRVASTSLPKDFPPRSYDGNFSLQPTREPYPGRLSHDNYAKQPLSRTIKSPSRENVRAITSLPVSPCSSPLRQLGPAYKSCFLSPPHPSYAFPGQDSGYNLAEFAASPFRMKKDAMMEPSSFRTQTPNSPLRSRLV.

Residues 1–202 (MPTWWGRKSC…SAVHGSRIGG (202 aa)) form a disordered region. Basic and acidic residues predominate over residues 11–28 (KNKDDNHRGIISTDRDIK). 2 stretches are compositionally biased toward low complexity: residues 40-64 (PTRG…GFDS) and 90-108 (VSGS…SSGS). Residues 214-470 (WKKGKFLGSG…ASQLLEHPFL (257 aa)) enclose the Protein kinase domain. ATP contacts are provided by residues 220–228 (LGSGTFGQV) and Lys243. Catalysis depends on Asp339, which acts as the Proton acceptor. Disordered stretches follow at residues 487-511 (PRSY…SHDN) and 590-609 (MEPS…SRLV). A compositionally biased stretch (polar residues) spans 594–609 (SFRTQTPNSPLRSRLV).

This sequence belongs to the protein kinase superfamily. STE Ser/Thr protein kinase family. MAP kinase kinase kinase subfamily. Interacts with PBL27. In terms of tissue distribution, expressed in flower buds, roots, leaves, seedlings, stems and immature siliques. Absent of mature pollen.

The enzyme catalyses L-seryl-[protein] + ATP = O-phospho-L-seryl-[protein] + ADP + H(+). The catalysed reaction is L-threonyl-[protein] + ATP = O-phospho-L-threonyl-[protein] + ADP + H(+). In Arabidopsis thaliana (Mouse-ear cress), this protein is Mitogen-activated protein kinase kinase kinase 3.